The following is a 458-amino-acid chain: ATP synthase subunit beta (458 aa).

148-155 contributes to the ATP binding site; sequence GGAGVGKT.

Belongs to the ATPase alpha/beta chains family. F-type ATPases have 2 components, CF(1) - the catalytic core - and CF(0) - the membrane proton channel. CF(1) has five subunits: alpha(3), beta(3), gamma(1), delta(1), epsilon(1). CF(0) has three main subunits: a(1), b(2) and c(9-12). The alpha and beta chains form an alternating ring which encloses part of the gamma chain. CF(1) is attached to CF(0) by a central stalk formed by the gamma and epsilon chains, while a peripheral stalk is formed by the delta and b chains.

Its subcellular location is the cell inner membrane. The catalysed reaction is ATP + H2O + 4 H(+)(in) = ADP + phosphate + 5 H(+)(out). Produces ATP from ADP in the presence of a proton gradient across the membrane. The catalytic sites are hosted primarily by the beta subunits. The protein is ATP synthase subunit beta of Francisella philomiragia subsp. philomiragia (strain ATCC 25017 / CCUG 19701 / FSC 153 / O#319-036).